Here is a 239-residue protein sequence, read N- to C-terminus: tRNA (guanine-N(7)-)-methyltransferase (239 aa).

Residues glutamate 69, glutamate 94, aspartate 121, and aspartate 144 each contribute to the S-adenosyl-L-methionine site. Aspartate 144 is a catalytic residue. Substrate is bound at residue lysine 148. Positions 150 to 155 (RHNKRR) are interaction with RNA. Substrate is bound by residues aspartate 180 and 217 to 220 (TKFE).

The protein belongs to the class I-like SAM-binding methyltransferase superfamily. TrmB family. Monomer.

The catalysed reaction is guanosine(46) in tRNA + S-adenosyl-L-methionine = N(7)-methylguanosine(46) in tRNA + S-adenosyl-L-homocysteine. Its pathway is tRNA modification; N(7)-methylguanine-tRNA biosynthesis. Functionally, catalyzes the formation of N(7)-methylguanine at position 46 (m7G46) in tRNA. This chain is tRNA (guanine-N(7)-)-methyltransferase, found in Escherichia coli O6:K15:H31 (strain 536 / UPEC).